The chain runs to 133 residues: Small ribosomal subunit protein uS8 (133 aa).

This sequence belongs to the universal ribosomal protein uS8 family. In terms of assembly, part of the 30S ribosomal subunit. Contacts proteins S5 and S12.

One of the primary rRNA binding proteins, it binds directly to 16S rRNA central domain where it helps coordinate assembly of the platform of the 30S subunit. This Thermosynechococcus vestitus (strain NIES-2133 / IAM M-273 / BP-1) protein is Small ribosomal subunit protein uS8.